The following is a 328-amino-acid chain: N-acetyl-gamma-glutamyl-phosphate reductase (328 aa).

Cys-143 is an active-site residue.

This sequence belongs to the NAGSA dehydrogenase family. Type 1 subfamily.

It is found in the cytoplasm. It catalyses the reaction N-acetyl-L-glutamate 5-semialdehyde + phosphate + NADP(+) = N-acetyl-L-glutamyl 5-phosphate + NADPH + H(+). It functions in the pathway amino-acid biosynthesis; L-arginine biosynthesis; N(2)-acetyl-L-ornithine from L-glutamate: step 3/4. Its function is as follows. Catalyzes the NADPH-dependent reduction of N-acetyl-5-glutamyl phosphate to yield N-acetyl-L-glutamate 5-semialdehyde. This is N-acetyl-gamma-glutamyl-phosphate reductase from Methanosphaerula palustris (strain ATCC BAA-1556 / DSM 19958 / E1-9c).